The following is a 416-amino-acid chain: Phosphoribosylamine--glycine ligase (416 aa).

Residues 107 to 303 form the ATP-grasp domain; sequence KDVMACAGVP…LAGLLMAAAT (197 aa). 133–184 is an ATP binding site; it reads LAAFGAPYVVKDDGLAAGKGVVVTDDVEAARAHANACDRVVVEEFLDGPEVS. Glutamate 273 and asparagine 275 together coordinate Mg(2+).

This sequence belongs to the GARS family. Mg(2+) serves as cofactor. Requires Mn(2+) as cofactor.

It catalyses the reaction 5-phospho-beta-D-ribosylamine + glycine + ATP = N(1)-(5-phospho-beta-D-ribosyl)glycinamide + ADP + phosphate + H(+). Its pathway is purine metabolism; IMP biosynthesis via de novo pathway; N(1)-(5-phospho-D-ribosyl)glycinamide from 5-phospho-alpha-D-ribose 1-diphosphate: step 2/2. This is Phosphoribosylamine--glycine ligase from Streptomyces coelicolor (strain ATCC BAA-471 / A3(2) / M145).